The sequence spans 626 residues: Carnitine O-acetyltransferase (626 aa).

N6-succinyllysine is present on lysine 93. Lysine 261 bears the N6-acetyllysine; alternate mark. N6-succinyllysine; alternate is present on lysine 261. N6-acetyllysine is present on lysine 268. Histidine 343 functions as the Proton acceptor in the catalytic mechanism. Residues lysine 419 and 423–430 (KSEKLSPD) contribute to the CoA site. Tyrosine 452 and serine 454 together coordinate (R)-carnitine. Residue serine 456 participates in CoA binding. Position 465 (threonine 465) interacts with (R)-carnitine. 2 residues coordinate CoA: arginine 504 and glutamine 555. A Microbody targeting signal motif is present at residues 624 to 626 (AKL).

It belongs to the carnitine/choline acetyltransferase family. In terms of assembly, monomer.

The protein resides in the endoplasmic reticulum. It is found in the peroxisome. The protein localises to the mitochondrion inner membrane. It catalyses the reaction (R)-carnitine + acetyl-CoA = O-acetyl-(R)-carnitine + CoA. The enzyme catalyses propanoyl-CoA + (R)-carnitine = O-propanoyl-(R)-carnitine + CoA. The catalysed reaction is butanoyl-CoA + (R)-carnitine = O-butanoyl-(R)-carnitine + CoA. It carries out the reaction hexanoyl-CoA + (R)-carnitine = O-hexanoyl-(R)-carnitine + CoA. It catalyses the reaction octanoyl-CoA + (R)-carnitine = O-octanoyl-(R)-carnitine + CoA. The enzyme catalyses decanoyl-CoA + (R)-carnitine = O-decanoyl-(R)-carnitine + CoA. The catalysed reaction is 3-methylbutanoyl-CoA + (R)-carnitine = O-3-methylbutanoyl-(R)-carnitine + CoA. It carries out the reaction 2-methylpropanoyl-CoA + (R)-carnitine = O-isobutanoyl-(R)-carnitine + CoA. It catalyses the reaction 2-methylbutanoyl-CoA + (R)-carnitine = O-2-methylbutanoyl-(R)-carnitine + CoA. The enzyme catalyses acetoacetyl-CoA + (R)-carnitine = O-3-oxobutanoyl-(R)-carnitine + CoA. The catalysed reaction is 3-hydroxybutanoyl-CoA + (R)-carnitine = O-3-hydroxybutanoyl-(R)-carnitine + CoA. It carries out the reaction 4,8-dimethylnonanoyl-CoA + (R)-carnitine = O-4,8-dimethylnonanoyl-(R)-carnitine + CoA. It catalyses the reaction 2,6-dimethylheptanoyl-CoA + (R)-carnitine = O-2,6-dimethylheptanoyl-(R)-carnitine + CoA. Its function is as follows. Catalyzes the reversible transfer of acyl groups from carnitine to coenzyme A (CoA) and regulates the acyl-CoA/CoA ratio. Also plays a crucial role in the transport of fatty acids for beta-oxidation. Responsible for the synthesis of short- and branched-chain acylcarnitines. Active towards some branched-chain amino acid oxidation pathway (BCAAO) intermediates. Trans-2-enoyl-CoAs and 2-methylacyl-CoAs are poor substrates. This chain is Carnitine O-acetyltransferase, found in Mus musculus (Mouse).